A 494-amino-acid polypeptide reads, in one-letter code: Glycerol kinase (494 aa).

Residue threonine 13 participates in ADP binding. Positions 13, 14, and 15 each coordinate ATP. A sn-glycerol 3-phosphate-binding site is contributed by threonine 13. An ADP-binding site is contributed by arginine 17. Positions 83, 84, 135, and 244 each coordinate sn-glycerol 3-phosphate. Arginine 83, glutamate 84, tyrosine 135, aspartate 244, and glutamine 245 together coordinate glycerol. ADP is bound by residues threonine 266 and glycine 309. Threonine 266, glycine 309, glutamine 313, and glycine 410 together coordinate ATP. ADP-binding residues include glycine 410 and asparagine 414.

It belongs to the FGGY kinase family.

The catalysed reaction is glycerol + ATP = sn-glycerol 3-phosphate + ADP + H(+). Its pathway is polyol metabolism; glycerol degradation via glycerol kinase pathway; sn-glycerol 3-phosphate from glycerol: step 1/1. With respect to regulation, inhibited by fructose 1,6-bisphosphate (FBP). Its function is as follows. Key enzyme in the regulation of glycerol uptake and metabolism. Catalyzes the phosphorylation of glycerol to yield sn-glycerol 3-phosphate. The polypeptide is Glycerol kinase (Shewanella oneidensis (strain ATCC 700550 / JCM 31522 / CIP 106686 / LMG 19005 / NCIMB 14063 / MR-1)).